Consider the following 213-residue polypeptide: Adenylate kinase (213 aa).

10–15 (GSGKGT) contributes to the ATP binding site. The NMP stretch occupies residues 30–59 (SVGDLLRNIISSSSELGKKIKGTVESGNLI). Residues arginine 36, 57–59 (NLI), 83–86 (GFPR), and glutamine 90 each bind AMP. Residues 125–160 (NRLACLDCKSIYSVSSFKSTTCAKCKSTRLEKRIDD) form an LID region. Arginine 126 provides a ligand contact to ATP. Zn(2+)-binding residues include cysteine 129 and cysteine 132. ATP is bound at residue 135–136 (IY). Zn(2+) contacts are provided by cysteine 146 and cysteine 149. AMP contacts are provided by arginine 157 and arginine 169. Residue leucine 195 coordinates ATP.

Belongs to the adenylate kinase family. Monomer.

Its subcellular location is the cytoplasm. The enzyme catalyses AMP + ATP = 2 ADP. It functions in the pathway purine metabolism; AMP biosynthesis via salvage pathway; AMP from ADP: step 1/1. In terms of biological role, catalyzes the reversible transfer of the terminal phosphate group between ATP and AMP. Plays an important role in cellular energy homeostasis and in adenine nucleotide metabolism. The sequence is that of Adenylate kinase from Wolbachia sp. subsp. Drosophila simulans (strain wRi).